A 104-amino-acid chain; its full sequence is Protein RnfH (104 aa).

The protein belongs to the UPF0125 (RnfH) family.

This chain is Protein RnfH, found in Pseudomonas fluorescens (strain Pf0-1).